The primary structure comprises 1158 residues: ATP-dependent helicase/deoxyribonuclease subunit B (1158 aa).

Residue 8-15 participates in ATP binding; sequence GRAGTGKS. Positions 791, 1112, 1115, and 1121 each coordinate [4Fe-4S] cluster.

It belongs to the helicase family. AddB/RexB type 1 subfamily. Heterodimer of AddA and AddB. Mg(2+) serves as cofactor. The cofactor is [4Fe-4S] cluster.

In terms of biological role, the heterodimer acts as both an ATP-dependent DNA helicase and an ATP-dependent, dual-direction single-stranded exonuclease. Recognizes the chi site generating a DNA molecule suitable for the initiation of homologous recombination. The AddB subunit has 5' -&gt; 3' nuclease activity but not helicase activity. This Clostridium perfringens (strain 13 / Type A) protein is ATP-dependent helicase/deoxyribonuclease subunit B.